Here is a 62-residue protein sequence, read N- to C-terminus: Bowman-Birk type proteinase inhibitor (62 aa).

7 disulfide bridges follow: Cys8–Cys61, Cys9–Cys24, Cys12–Cys57, Cys14–Cys22, Cys31–Cys38, Cys35–Cys50, and Cys40–Cys48.

As to quaternary structure, forms a monomer at protein concentrations of below 1 mM. At concentrations of above 2 mM, self-associates.

Its function is as follows. Inhibits trypsin but not chymotrypsin. Inhibits the trypsin-like proteinase activity present in larvae of the crop pests Adoxophyes orana, Hyphantria cunea, Lobesia botrana and Ostrinia nubilalis. The protein is Bowman-Birk type proteinase inhibitor of Medicago scutellata (Snail medic).